Reading from the N-terminus, the 1097-residue chain is UPF0746 protein DDB_G0281095 (1097 aa).

Over residues 1-11 (MVNNNKRKEIE) the composition is skewed to basic and acidic residues. Positions 1–24 (MVNNNKRKEIENQENDNDDDNDGL) are disordered. Over residues 12 to 22 (NQENDNDDDND) the composition is skewed to acidic residues. One can recognise an SAP domain in the interval 35–69 (YDSIRSKELQTIAKSLGLPNNGKKQEVYKRIEGYF). The stretch at 329–521 (FKEIREIHQQ…QLILELNEIQ (193 aa)) forms a coiled coil.

The protein belongs to the UPF0746 family.

The sequence is that of UPF0746 protein DDB_G0281095 from Dictyostelium discoideum (Social amoeba).